Consider the following 302-residue polypeptide: Mitochondrial glycine transporter (302 aa).

3 Solcar repeats span residues 22-112 (HPVF…LKHH), 119-203 (PKPL…AKKL), and 213-297 (FSPV…MMEK). 6 helical membrane-spanning segments follow: residues 28 to 53 (FVCG…TRIQ), 87 to 113 (GVSP…KHHF), 125 to 150 (VMLG…TRYE), 178 to 201 (GLTA…TRAK), 217 to 243 (LNFS…KTHM), and 272 to 290 (GGVP…AWTV).

The protein belongs to the mitochondrial carrier (TC 2.A.29) family. SLC25A38 subfamily.

Its subcellular location is the mitochondrion inner membrane. It catalyses the reaction glycine(in) = glycine(out). Functionally, mitochondrial glycine transporter that imports glycine into the mitochondrial matrix. Plays an important role in providing glycine for the first enzymatic step in heme biosynthesis, the condensation of glycine with succinyl-CoA to produce 5-aminolevulinate (ALA) in the mitochondrial matrix. Required during erythropoiesis. In terms of biological role, may play a role as pro-apoptotic protein that induces caspase-dependent apoptosis. The sequence is that of Mitochondrial glycine transporter from Xenopus laevis (African clawed frog).